Consider the following 123-residue polypeptide: MEYSTFGKHIIVDLWGVDFSLLDDMYFLEHHLIHAADLSGAHVLNVSTKEFDPHGVTVLVLLSESHLSIHTYPEQNFAAIDCYTCGTTVEPQIAIDYIVSILKPNEMHIRRLIRGIGEIVNTD.

Catalysis depends on S65, which acts as the Schiff-base intermediate with substrate; via pyruvic acid. S65 bears the Pyruvic acid (Ser); by autocatalysis mark. Residue H70 is the Proton acceptor; for processing activity of the active site. C85 serves as the catalytic Proton donor; for catalytic activity.

This sequence belongs to the prokaryotic AdoMetDC family. Type 1 subfamily. In terms of assembly, heterotetramer of two alpha and two beta chains arranged as a dimer of alpha/beta heterodimers. Pyruvate is required as a cofactor. In terms of processing, is synthesized initially as an inactive proenzyme. Formation of the active enzyme involves a self-maturation process in which the active site pyruvoyl group is generated from an internal serine residue via an autocatalytic post-translational modification. Two non-identical subunits are generated from the proenzyme in this reaction, and the pyruvate is formed at the N-terminus of the alpha chain, which is derived from the carboxyl end of the proenzyme. The post-translation cleavage follows an unusual pathway, termed non-hydrolytic serinolysis, in which the side chain hydroxyl group of the serine supplies its oxygen atom to form the C-terminus of the beta chain, while the remainder of the serine residue undergoes an oxidative deamination to produce ammonia and the pyruvoyl group blocking the N-terminus of the alpha chain.

It carries out the reaction S-adenosyl-L-methionine + H(+) = S-adenosyl 3-(methylsulfanyl)propylamine + CO2. It functions in the pathway amine and polyamine biosynthesis; S-adenosylmethioninamine biosynthesis; S-adenosylmethioninamine from S-adenosyl-L-methionine: step 1/1. In terms of biological role, catalyzes the decarboxylation of S-adenosylmethionine to S-adenosylmethioninamine (dcAdoMet), the propylamine donor required for the synthesis of the polyamines spermine and spermidine from the diamine putrescine. The protein is S-adenosylmethionine decarboxylase proenzyme 2 of Bacillus anthracis.